The primary structure comprises 95 residues: Aspartyl/glutamyl-tRNA(Asn/Gln) amidotransferase subunit C (95 aa).

Belongs to the GatC family. As to quaternary structure, heterotrimer of A, B and C subunits.

It carries out the reaction L-glutamyl-tRNA(Gln) + L-glutamine + ATP + H2O = L-glutaminyl-tRNA(Gln) + L-glutamate + ADP + phosphate + H(+). It catalyses the reaction L-aspartyl-tRNA(Asn) + L-glutamine + ATP + H2O = L-asparaginyl-tRNA(Asn) + L-glutamate + ADP + phosphate + 2 H(+). Its function is as follows. Allows the formation of correctly charged Asn-tRNA(Asn) or Gln-tRNA(Gln) through the transamidation of misacylated Asp-tRNA(Asn) or Glu-tRNA(Gln) in organisms which lack either or both of asparaginyl-tRNA or glutaminyl-tRNA synthetases. The reaction takes place in the presence of glutamine and ATP through an activated phospho-Asp-tRNA(Asn) or phospho-Glu-tRNA(Gln). This chain is Aspartyl/glutamyl-tRNA(Asn/Gln) amidotransferase subunit C, found in Rhizobium etli (strain CIAT 652).